A 442-amino-acid chain; its full sequence is Proline--tRNA ligase (442 aa).

Belongs to the class-II aminoacyl-tRNA synthetase family. ProS type 2 subfamily. In terms of assembly, homodimer.

Its subcellular location is the cytoplasm. It catalyses the reaction tRNA(Pro) + L-proline + ATP = L-prolyl-tRNA(Pro) + AMP + diphosphate. Catalyzes the attachment of proline to tRNA(Pro) in a two-step reaction: proline is first activated by ATP to form Pro-AMP and then transferred to the acceptor end of tRNA(Pro). This is Proline--tRNA ligase from Brucella suis (strain ATCC 23445 / NCTC 10510).